Reading from the N-terminus, the 495-residue chain is 3-octaprenyl-4-hydroxybenzoate carboxy-lyase (495 aa).

Asn172 contributes to the Mn(2+) binding site. Residues 175 to 177, 189 to 191, and 194 to 195 each bind prenylated FMN; these read IYR, RWL, and RG. Glu238 contributes to the Mn(2+) binding site. Asp287 serves as the catalytic Proton donor.

Belongs to the UbiD family. Homohexamer. It depends on prenylated FMN as a cofactor. Mn(2+) is required as a cofactor.

It localises to the cell membrane. The catalysed reaction is a 4-hydroxy-3-(all-trans-polyprenyl)benzoate + H(+) = a 2-(all-trans-polyprenyl)phenol + CO2. The protein operates within cofactor biosynthesis; ubiquinone biosynthesis. In terms of biological role, catalyzes the decarboxylation of 3-octaprenyl-4-hydroxy benzoate to 2-octaprenylphenol, an intermediate step in ubiquinone biosynthesis. In Marinobacter nauticus (strain ATCC 700491 / DSM 11845 / VT8) (Marinobacter aquaeolei), this protein is 3-octaprenyl-4-hydroxybenzoate carboxy-lyase.